The following is an 867-amino-acid chain: Xylosyltransferase 2 (867 aa).

The Cytoplasmic portion of the chain corresponds to 1–15; sequence MVASARVQKLVRRYK. The chain crosses the membrane as a helical; Signal-anchor for type II membrane protein span at residues 16 to 36; the sequence is LAIATALAILLLQGLVVWSFS. Residues 37–867 are Lumenal-facing; it reads VLEDDEPGEK…GPVKADGRLR (831 aa). A disordered region spans residues 41–122; it reads DEPGEKGRQK…PPPEAPGRQN (82 aa). Positions 53 to 65 are enriched in basic and acidic residues; the sequence is RPLDPSEGSKDTD. Over residues 73–82 the composition is skewed to basic residues; it reads SAGRRHGRWR. Asparagine 122 carries N-linked (GlcNAc...) asparagine glycosylation. Cystine bridges form between cysteine 161–cysteine 189 and cysteine 205–cysteine 447. Residues valine 238, aspartate 266, and 295 to 297 contribute to the UDP-alpha-D-xylose site; that span reads TIW. The N-linked (GlcNAc...) asparagine glycan is linked to asparagine 326. Residues 399–400, serine 480, and 503–504 contribute to the UDP-alpha-D-xylose site; these read DW and RK. Cystine bridges form between cysteine 580/cysteine 835 and cysteine 828/cysteine 841. An N-linked (GlcNAc...) asparagine glycan is attached at asparagine 685.

It belongs to the glycosyltransferase 14 family. XylT subfamily. As to quaternary structure, monomer. Mg(2+) is required as a cofactor. Mn(2+) serves as cofactor. Contains disulfide bonds.

The protein localises to the golgi apparatus membrane. It is found in the secreted. It carries out the reaction UDP-alpha-D-xylose + L-seryl-[protein] = 3-O-(beta-D-xylosyl)-L-seryl-[protein] + UDP + H(+). Its pathway is glycan metabolism; chondroitin sulfate biosynthesis. It participates in glycan metabolism; heparan sulfate biosynthesis. Catalyzes the first step in the biosynthesis of chondroitin sulfate, heparan sulfate and dermatan sulfate proteoglycans, such as DCN. Transfers D-xylose from UDP-D-xylose to specific serine residues of the core protein. This Bos taurus (Bovine) protein is Xylosyltransferase 2 (XYLT2).